The following is a 150-amino-acid chain: Large ribosomal subunit protein bL9 (150 aa).

Belongs to the bacterial ribosomal protein bL9 family.

Its function is as follows. Binds to the 23S rRNA. The polypeptide is Large ribosomal subunit protein bL9 (Arthrobacter sp. (strain FB24)).